We begin with the raw amino-acid sequence, 251 residues long: Small ribosomal subunit protein uS3 (251 aa).

One can recognise a KH type-2 domain in the interval 39–109 (IRNYVLARLK…EVKIDVVEVI (71 aa)). Basic and acidic residues predominate over residues 221–239 (EMKRMKDRRADSKSRPRDP). The interval 221 to 251 (EMKRMKDRRADSKSRPRDPRSKRRRSRTKRA) is disordered. A compositionally biased stretch (basic residues) spans 240–251 (RSKRRRSRTKRA).

This sequence belongs to the universal ribosomal protein uS3 family. As to quaternary structure, part of the 30S ribosomal subunit. Forms a tight complex with proteins S10 and S14.

Binds the lower part of the 30S subunit head. Binds mRNA in the 70S ribosome, positioning it for translation. The protein is Small ribosomal subunit protein uS3 of Chlorobium limicola (strain DSM 245 / NBRC 103803 / 6330).